An 829-amino-acid chain; its full sequence is Periplasmic nitrate reductase (829 aa).

Positions 1-30 (MKMTRRAFVKANAAASAAAVAGITLPASAA) form a signal peptide, tat-type signal. A 4Fe-4S Mo/W bis-MGD-type domain is found at 41–97 (ITWDKAPCRFCGTGCSVLVGTQNGKVVATQGDPEAPVNKGLNCIKGYFLSKIMYGQD). Residues C48, C51, C55, and C83 each coordinate [4Fe-4S] cluster. Mo-bis(molybdopterin guanine dinucleotide) contacts are provided by residues K85, Q152, N177, C181, 214 to 221 (WGSNMAEM), 245 to 249 (STYYH), 264 to 266 (QSD), M374, Q378, N484, 510 to 511 (SD), K533, D560, and 718 to 727 (TGRVLEHWHT). Substrate is bound at residue F794. Residues N802 and K819 each contribute to the Mo-bis(molybdopterin guanine dinucleotide) site.

Belongs to the prokaryotic molybdopterin-containing oxidoreductase family. NasA/NapA/NarB subfamily. As to quaternary structure, component of the periplasmic nitrate reductase NapAB complex composed of NapA and NapB. It depends on [4Fe-4S] cluster as a cofactor. Requires Mo-bis(molybdopterin guanine dinucleotide) as cofactor. Predicted to be exported by the Tat system. The position of the signal peptide cleavage has not been experimentally proven.

Its subcellular location is the periplasm. It catalyses the reaction 2 Fe(II)-[cytochrome] + nitrate + 2 H(+) = 2 Fe(III)-[cytochrome] + nitrite + H2O. Catalytic subunit of the periplasmic nitrate reductase complex NapAB. Receives electrons from NapB and catalyzes the reduction of nitrate to nitrite. This is Periplasmic nitrate reductase from Vibrio vulnificus (strain CMCP6).